The following is a 94-amino-acid chain: Large ribosomal subunit protein bL27 (94 aa).

Residues Met-1 to Phe-9 constitute a propeptide that is removed on maturation. Positions Lys-12–Lys-32 are disordered. Residues Asn-20–Lys-32 are compositionally biased toward basic and acidic residues.

It belongs to the bacterial ribosomal protein bL27 family. In terms of processing, the N-terminus is cleaved by ribosomal processing cysteine protease Prp.

In Staphylococcus carnosus (strain TM300), this protein is Large ribosomal subunit protein bL27.